The chain runs to 163 residues: Putative pre-16S rRNA nuclease (163 aa).

This sequence belongs to the YqgF nuclease family.

The protein localises to the cytoplasm. Could be a nuclease involved in processing of the 5'-end of pre-16S rRNA. In Zymomonas mobilis subsp. mobilis (strain ATCC 31821 / ZM4 / CP4), this protein is Putative pre-16S rRNA nuclease.